The sequence spans 879 residues: Phosphoenolpyruvate carboxylase (879 aa).

Residues His138 and Lys545 contribute to the active site.

Belongs to the PEPCase type 1 family. It depends on Mg(2+) as a cofactor.

The enzyme catalyses oxaloacetate + phosphate = phosphoenolpyruvate + hydrogencarbonate. Its function is as follows. Forms oxaloacetate, a four-carbon dicarboxylic acid source for the tricarboxylic acid cycle. In Haemophilus influenzae (strain ATCC 51907 / DSM 11121 / KW20 / Rd), this protein is Phosphoenolpyruvate carboxylase (ppc).